The following is a 129-amino-acid chain: M-zodatoxin-Lt8g (129 aa).

The signal sequence occupies residues 1 to 20 (MKYFVVALALVAAFACIAES). A propeptide spanning residues 21–60 (KPAESEHELAEVEEENELADLEDAVWLEHLADLSDLEEAR) is cleaved from the precursor. A Processing quadruplet motif motif is present at residues 57-60 (EEAR).

Post-translationally, cleavage of the propeptide depends on the processing quadruplet motif (XXXR, with at least one of X being E). As to expression, expressed by the venom gland.

Its subcellular location is the secreted. Functionally, insecticidal, cytolytic and antimicrobial peptide. Has insecticidal activity against the flesh fly S.carnaria. Has antibacterial activity against the Gram-negative bacteria E.coli. Forms voltage-dependent, ion-permeable channels in membranes. At high concentration causes cell membrane lysis. The polypeptide is M-zodatoxin-Lt8g (cit 1-8) (Lachesana tarabaevi (Spider)).